The following is a 350-amino-acid chain: 4-hydroxy-2-oxovalerate aldolase 3 (350 aa).

Residues 13–265 enclose the Pyruvate carboxyltransferase domain; sequence VVFHDMCLRD…DTGVDLFRLM (253 aa). 21-22 lines the substrate pocket; the sequence is RD. Aspartate 22 is a Mn(2+) binding site. Histidine 25 functions as the Proton acceptor in the catalytic mechanism. Substrate is bound by residues serine 175 and histidine 204. Mn(2+)-binding residues include histidine 204 and histidine 206. Tyrosine 295 contacts substrate.

This sequence belongs to the 4-hydroxy-2-oxovalerate aldolase family.

The enzyme catalyses (S)-4-hydroxy-2-oxopentanoate = acetaldehyde + pyruvate. The polypeptide is 4-hydroxy-2-oxovalerate aldolase 3 (lapG) (Azotobacter vinelandii (strain DJ / ATCC BAA-1303)).